The sequence spans 281 residues: MSLSDLKPVIERAFENRDQINAQTKGEVRDAVNEALNALDSGKARVAEKFQGSWEVHQWLKMAVLLSFRLNDMSTIAGGPGENTNWWDKVPSKFEGWGEAEFRKAGFRAVPGAIVRRSAYIAPNVVLMPSFVNLGAHVDEGTMVDTWVTVGSCAQIGKNCHLSGGVGIGGVLEPLQANPVIIEDNCFIGARSEVVEGVIVGEGAVLSMGVFISASTKIIDRATGEVHIGKVPPYSVVVPGSLPGKANPDGSPAPSLYCCVIVKTVDAQTRAKTAINELLRD.

Substrate is bound by residues Arg108 and Asp145.

Belongs to the transferase hexapeptide repeat family. Homotrimer.

Its subcellular location is the cytoplasm. It carries out the reaction (S)-2,3,4,5-tetrahydrodipicolinate + succinyl-CoA + H2O = (S)-2-succinylamino-6-oxoheptanedioate + CoA. The protein operates within amino-acid biosynthesis; L-lysine biosynthesis via DAP pathway; LL-2,6-diaminopimelate from (S)-tetrahydrodipicolinate (succinylase route): step 1/3. In Parvibaculum lavamentivorans (strain DS-1 / DSM 13023 / NCIMB 13966), this protein is 2,3,4,5-tetrahydropyridine-2,6-dicarboxylate N-succinyltransferase.